A 371-amino-acid polypeptide reads, in one-letter code: Aminomethyltransferase (371 aa).

This sequence belongs to the GcvT family. As to quaternary structure, the glycine cleavage system is composed of four proteins: P, T, L and H.

The catalysed reaction is N(6)-[(R)-S(8)-aminomethyldihydrolipoyl]-L-lysyl-[protein] + (6S)-5,6,7,8-tetrahydrofolate = N(6)-[(R)-dihydrolipoyl]-L-lysyl-[protein] + (6R)-5,10-methylene-5,6,7,8-tetrahydrofolate + NH4(+). The glycine cleavage system catalyzes the degradation of glycine. The polypeptide is Aminomethyltransferase (Nitrosococcus oceani (strain ATCC 19707 / BCRC 17464 / JCM 30415 / NCIMB 11848 / C-107)).